A 127-amino-acid polypeptide reads, in one-letter code: Small ribosomal subunit protein uS11 (127 aa).

The protein belongs to the universal ribosomal protein uS11 family. As to quaternary structure, part of the 30S ribosomal subunit. Interacts with proteins S7 and S18. Binds to IF-3.

In terms of biological role, located on the platform of the 30S subunit, it bridges several disparate RNA helices of the 16S rRNA. Forms part of the Shine-Dalgarno cleft in the 70S ribosome. The chain is Small ribosomal subunit protein uS11 from Streptococcus pyogenes serotype M1.